Reading from the N-terminus, the 390-residue chain is MTQIATENPSTKSVSNKTDRKKGLSIFILLLLIIGIACALYWFFFLKDFEETEDAYVGGNQVMVSSQVAGNVAKINADNMDKVHAGDILVELDDTNAKLSFEQAKSNLANAVRQVEQLGFTVQQLQSAVHANEISLAQAQGNLARRVQLEKMGAIDKESFQHAKEAVELAKANLNASKNQLAANQALLRNVPLREQPQIQNAINSLKQAWLNLQRTKIRSPIDGYVARRNVQVGQAVSVGGALMAVVSNEQMWLEANFKETQLTNMRIGQPVKIHFDLYGKNKEFDGVINGIEMGTGNAFSLLPSQNATGNWIKVVQRVPVRIKLDPQQFTETPLRIGLSATAKVRISDSSGAMLREKTEPKTLFSTDTLKYDESAVENLIESIIQQNSH.

Over 1 to 25 (MTQIATENPSTKSVSNKTDRKKGLS) the chain is Cytoplasmic. A helical membrane pass occupies residues 26–46 (IFILLLLIIGIACALYWFFFL). Over 47 to 390 (KDFEETEDAY…IESIIQQNSH (344 aa)) the chain is Periplasmic. Positions 160 to 190 (FQHAKEAVELAKANLNASKNQLAANQALLRN) form a coiled coil.

This sequence belongs to the membrane fusion protein (MFP) (TC 8.A.1) family.

It is found in the cell inner membrane. Confers resistance to antibiotics. The protein is Multidrug export protein EmrA (emrA) of Haemophilus influenzae (strain ATCC 51907 / DSM 11121 / KW20 / Rd).